Reading from the N-terminus, the 454-residue chain is Adenosylmethionine-8-amino-7-oxononanoate aminotransferase (454 aa).

Residue 119-120 (GA) coordinates pyridoxal 5'-phosphate. Tyr152 contributes to the substrate binding site. Pyridoxal 5'-phosphate is bound at residue Asp257. Lys286, Gly321, and Arg416 together coordinate substrate. Residue Lys286 is modified to N6-(pyridoxal phosphate)lysine.

Belongs to the class-III pyridoxal-phosphate-dependent aminotransferase family. BioA subfamily. In terms of assembly, homodimer. Pyridoxal 5'-phosphate is required as a cofactor.

It localises to the cytoplasm. The enzyme catalyses (8S)-8-amino-7-oxononanoate + S-adenosyl-L-methionine = S-adenosyl-4-methylsulfanyl-2-oxobutanoate + (7R,8S)-7,8-diammoniononanoate. The protein operates within cofactor biosynthesis; biotin biosynthesis; 7,8-diaminononanoate from 8-amino-7-oxononanoate (SAM route): step 1/1. In terms of biological role, catalyzes the transfer of the alpha-amino group from S-adenosyl-L-methionine (SAM) to 7-keto-8-aminopelargonic acid (KAPA) to form 7,8-diaminopelargonic acid (DAPA). It is the only aminotransferase known to utilize SAM as an amino donor. This Anoxybacillus flavithermus (strain DSM 21510 / WK1) protein is Adenosylmethionine-8-amino-7-oxononanoate aminotransferase.